The sequence spans 82 residues: Large ribosomal subunit protein uL23 (82 aa).

It belongs to the universal ribosomal protein uL23 family. Part of the 50S ribosomal subunit. Contacts protein L29.

Functionally, binds to 23S rRNA. One of the proteins that surrounds the polypeptide exit tunnel on the outside of the ribosome. The sequence is that of Large ribosomal subunit protein uL23 from Natronomonas pharaonis (strain ATCC 35678 / DSM 2160 / CIP 103997 / JCM 8858 / NBRC 14720 / NCIMB 2260 / Gabara) (Halobacterium pharaonis).